A 549-amino-acid polypeptide reads, in one-letter code: Glucose-6-phosphate isomerase (549 aa).

Residues Lys-80, Lys-228, and Lys-234 each carry the N6-acetyllysine modification. The active-site Proton donor is the Glu-355. Active-site residues include His-386 and Lys-514.

This sequence belongs to the GPI family.

It is found in the cytoplasm. The catalysed reaction is alpha-D-glucose 6-phosphate = beta-D-fructose 6-phosphate. It participates in carbohydrate biosynthesis; gluconeogenesis. The protein operates within carbohydrate degradation; glycolysis; D-glyceraldehyde 3-phosphate and glycerone phosphate from D-glucose: step 2/4. Its function is as follows. Catalyzes the reversible isomerization of glucose-6-phosphate to fructose-6-phosphate. In Escherichia coli O139:H28 (strain E24377A / ETEC), this protein is Glucose-6-phosphate isomerase.